The sequence spans 122 residues: Large ribosomal subunit protein bL12 (122 aa).

Belongs to the bacterial ribosomal protein bL12 family. Homodimer. Part of the ribosomal stalk of the 50S ribosomal subunit. Forms a multimeric L10(L12)X complex, where L10 forms an elongated spine to which 2 to 4 L12 dimers bind in a sequential fashion. Binds GTP-bound translation factors.

Functionally, forms part of the ribosomal stalk which helps the ribosome interact with GTP-bound translation factors. Is thus essential for accurate translation. The polypeptide is Large ribosomal subunit protein bL12 (Actinobacillus pleuropneumoniae serotype 5b (strain L20)).